We begin with the raw amino-acid sequence, 70 residues long: Large ribosomal subunit protein bL31 (70 aa).

Positions 16, 18, 37, and 40 each coordinate Zn(2+).

The protein belongs to the bacterial ribosomal protein bL31 family. Type A subfamily. Part of the 50S ribosomal subunit. Zn(2+) is required as a cofactor.

Binds the 23S rRNA. In Cronobacter sakazakii (strain ATCC BAA-894) (Enterobacter sakazakii), this protein is Large ribosomal subunit protein bL31.